We begin with the raw amino-acid sequence, 74 residues long: Cecropin-P4 (74 aa).

Positions 1 to 13 (MFLMYLLVQTTES) are cleaved as a signal peptide. A propeptide spans 45 to 74 (HRRSVAHQEEASLHVKTDELPSPDTVREQL) (removed in mature form). Positions 51 to 74 (HQEEASLHVKTDELPSPDTVREQL) are disordered.

It belongs to the cecropin family. As to expression, expressed in the body wall, intestine, uterus and ovary.

The protein localises to the secreted. Functionally, has antibacterial activity against several Gram-positive and Gram-negative bacteria. Is weakly active against yeasts. Acts by a nonpore mechanism. The protein is Cecropin-P4 (ASCEC-4) of Ascaris suum (Pig roundworm).